A 579-amino-acid polypeptide reads, in one-letter code: Glutamine--tRNA ligase (579 aa).

Residues 41-51 carry the 'HIGH' region motif; the sequence is PEPNGYLHIGH. ATP contacts are provided by residues 42 to 44 and 48 to 54; these read EPN and HIGHAKA. The L-glutamine site is built by D74 and Y218. ATP is bound by residues T237, 285 to 286, and 293 to 295; these read RL and MSK. The 'KMSKS' region motif lies at 292 to 296; the sequence is VMSKR.

This sequence belongs to the class-I aminoacyl-tRNA synthetase family. As to quaternary structure, monomer.

The protein localises to the cytoplasm. It catalyses the reaction tRNA(Gln) + L-glutamine + ATP = L-glutaminyl-tRNA(Gln) + AMP + diphosphate. This chain is Glutamine--tRNA ligase, found in Xanthomonas campestris pv. campestris (strain 8004).